The following is a 161-amino-acid chain: Ribonuclease H (161 aa).

Positions 11-152 constitute an RNase H type-1 domain; sequence GPRPVVIHTD…ADQLARDGLT (142 aa). Mg(2+) contacts are provided by D20, E58, D80, and D144. Residues 137-161 are disordered; sequence HDENERADQLARDGLTENRMKSRIG.

This sequence belongs to the RNase H family. In terms of assembly, monomer. Mg(2+) is required as a cofactor.

It is found in the cytoplasm. It carries out the reaction Endonucleolytic cleavage to 5'-phosphomonoester.. Endonuclease that specifically degrades the RNA of RNA-DNA hybrids. The chain is Ribonuclease H from Rhodopseudomonas palustris (strain HaA2).